The chain runs to 276 residues: Membrane protein insertase YidC 2 (276 aa).

Residues 1–22 form the signal peptide; it reads MGVKKKLKLTSLLGLSLLIMTA. C23 is lipidated: N-palmitoyl cysteine. C23 carries S-diacylglycerol cysteine lipidation. 4 helical membrane passes run 58–78, 130–150, 169–189, and 207–227; these read ISIG…LLPV, SDSL…FQAL, VDTT…STWL, and GIPV…ALYW.

It belongs to the OXA1/ALB3/YidC family. Type 2 subfamily. As to quaternary structure, interacts with KhpB (also called EloR/Jag).

The protein resides in the cell membrane. Functionally, required for the insertion and/or proper folding and/or complex formation of integral membrane proteins into the membrane. Involved in integration of membrane proteins that insert both dependently and independently of the Sec translocase complex, as well as at least some lipoproteins. This Streptococcus pneumoniae (strain ATCC BAA-255 / R6) protein is Membrane protein insertase YidC 2.